A 100-amino-acid polypeptide reads, in one-letter code: Small ribosomal subunit protein uS14 (100 aa).

Belongs to the universal ribosomal protein uS14 family. Part of the 30S ribosomal subunit. Contacts proteins S3 and S10.

Its function is as follows. Binds 16S rRNA, required for the assembly of 30S particles and may also be responsible for determining the conformation of the 16S rRNA at the A site. The protein is Small ribosomal subunit protein uS14 of Prochlorococcus marinus (strain NATL1A).